A 315-amino-acid polypeptide reads, in one-letter code: Ribosomal RNA large subunit methyltransferase F (315 aa).

Belongs to the methyltransferase superfamily. METTL16/RlmF family.

The protein resides in the cytoplasm. It catalyses the reaction adenosine(1618) in 23S rRNA + S-adenosyl-L-methionine = N(6)-methyladenosine(1618) in 23S rRNA + S-adenosyl-L-homocysteine + H(+). In terms of biological role, specifically methylates the adenine in position 1618 of 23S rRNA. This chain is Ribosomal RNA large subunit methyltransferase F, found in Aeromonas salmonicida (strain A449).